The primary structure comprises 590 residues: Putative DEAD-box ATP-dependent RNA helicase 51 (590 aa).

Residues 1-81 are disordered; the sequence is MHPIKLCARS…KQGEGKKGSG (81 aa). Positions 40–51 are enriched in polar residues; it reads AACNSEGENNAT. Residues 59-78 show a composition bias toward basic and acidic residues; the sequence is NKKMKEEKSKRKKKQGEGKK. A Q motif motif is present at residues 86 to 114; the sequence is KLFSDLPISDLTANAIRDMNYTHLTEIQA. The 177-residue stretch at 117-293 folds into the Helicase ATP-binding domain; that stretch reads IPPLMLGSDV…KLTFGSKEER (177 aa). 130–137 contributes to the ATP binding site; the sequence is AKTGSGKT. Positions 240–243 match the DEAD box motif; it reads DEAD. One can recognise a Helicase C-terminal domain in the interval 329-481; it reads VLYAFLKKAL…ELVPKLQPYL (153 aa). The tract at residues 549-590 is disordered; the sequence is LESSASKHRKKRNVNTGRRHGIGPSNPYGRKGSDDRRQFARF. Residues 554–569 show a composition bias toward basic residues; the sequence is SKHRKKRNVNTGRRHG. Positions 579 to 590 are enriched in basic and acidic residues; the sequence is KGSDDRRQFARF.

Belongs to the DEAD box helicase family. DDX18/HAS1 subfamily.

The catalysed reaction is ATP + H2O = ADP + phosphate + H(+). In Oryza sativa subsp. japonica (Rice), this protein is Putative DEAD-box ATP-dependent RNA helicase 51.